The sequence spans 530 residues: Sugar transport protein MST6 (530 aa).

The Cytoplasmic segment spans residues 1–18 (MAGGVVVNNGGGKDYPGK). A helical membrane pass occupies residues 19–39 (LTMFVLFACIVAATGGLIFGY). The Extracellular segment spans residues 40–81 (DIGISGGVTSMNPFLIKFFPSVYRKEQAAEKNQSNQYCKFDS). A helical membrane pass occupies residues 82–102 (PLLTMFTSSLYLAALVASFFA). Topologically, residues 103-119 (STVTRVAGRKWSMFGGG) are cytoplasmic. A helical membrane pass occupies residues 120-140 (VTFLVGAALNGAAKNVLMLIL). At 141–142 (GR) the chain is on the extracellular side. The helical transmembrane segment at 143–163 (VLLGVGVGFANQSVPLYLSEM) threads the bilayer. Topologically, residues 164–169 (APARLR) are cytoplasmic. The chain crosses the membrane as a helical span at residues 170–190 (GMLNIGFQLMITIGILCANLI). The Extracellular segment spans residues 191-204 (NYGTAKIKGGWGWR). The helical transmembrane segment at 205–225 (VSLALAAVPAAIIAVGALFLP) threads the bilayer. Residues 226–291 (DTPNSLIDRG…YRPQLTMAIA (66 aa)) lie on the Cytoplasmic side of the membrane. The helical transmembrane segment at 292–312 (IPLFQQLTGINVIMFYAPVLF) threads the bilayer. The Extracellular portion of the chain corresponds to 313–323 (KTLGFADDASL). Residues 324–344 (MSAVITGLVNVFATFVSIVTV) form a helical membrane-spanning segment. At 345–359 (DRLGRRKLFLQGGTQ) the chain is on the cytoplasmic side. The helical transmembrane segment at 360–380 (MLACQIVVGSLIGAKFGFSGV) threads the bilayer. At 381–388 (ADIPKAYA) the chain is on the extracellular side. The helical transmembrane segment at 389-409 (AFVVLFICAYVAGFAWSWGPL) threads the bilayer. At 410–428 (GWLVPSEIFPLEIRSAGQS) the chain is on the cytoplasmic side. Residues 429–449 (INVSVNMLFTFIIAQAFLPML) traverse the membrane as a helical segment. Residues 450–453 (CRFK) are Extracellular-facing. A helical membrane pass occupies residues 454 to 474 (FILFFFFGAWVVIMTLFVAFF). Topologically, residues 475–530 (LPETKNVPIEEMVLVWKSHWYWGRFIRDEDVHVGADVEMPAAGNRNGKVDPAKLAN) are cytoplasmic.

It belongs to the major facilitator superfamily. Sugar transporter (TC 2.A.1.1) family. As to expression, expressed in leaf blades, leaf sheaths, anthers, ovaries and embryos. Expressed at low levels in roots and shoots.

Its subcellular location is the cell membrane. Functionally, mediates active uptake of hexoses by sugar:proton symport. Can transport glucose, fructose, mannose, galactose, xylose and ribose. In Oryza sativa subsp. japonica (Rice), this protein is Sugar transport protein MST6.